A 392-amino-acid chain; its full sequence is DNA-directed RNA polymerase subunit Rpo1C (392 aa).

Belongs to the RNA polymerase beta' chain family. In terms of assembly, part of the RNA polymerase complex.

The protein localises to the cytoplasm. The catalysed reaction is RNA(n) + a ribonucleoside 5'-triphosphate = RNA(n+1) + diphosphate. Its function is as follows. DNA-dependent RNA polymerase (RNAP) catalyzes the transcription of DNA into RNA using the four ribonucleoside triphosphates as substrates. Forms part of the jaw domain. The chain is DNA-directed RNA polymerase subunit Rpo1C from Sulfurisphaera tokodaii (strain DSM 16993 / JCM 10545 / NBRC 100140 / 7) (Sulfolobus tokodaii).